The primary structure comprises 34 residues: Corticostatin-6 (34 aa).

Intrachain disulfides connect Cys3–Cys31, Cys5–Cys20, and Cys10–Cys30.

Belongs to the alpha-defensin family. Lung, spleen, small intestine, pituitary gland, adrenal medulla and plasma.

The protein resides in the secreted. Functionally, microbicidal activity and inhibits corticotropin (ACTH) stimulated corticosterone production. This is Corticostatin-6 from Oryctolagus cuniculus (Rabbit).